We begin with the raw amino-acid sequence, 328 residues long: Cytosolic Fe-S cluster assembly factor NBP35 (328 aa).

4 residues coordinate [4Fe-4S] cluster: Cys-27, Cys-41, Cys-44, and Cys-50. 80-87 (GKGGVGKS) serves as a coordination point for ATP. Cys-253 and Cys-256 together coordinate [4Fe-4S] cluster.

This sequence belongs to the Mrp/NBP35 ATP-binding proteins family. NUBP1/NBP35 subfamily. In terms of assembly, heterotetramer of 2 NBP35 and 2 CFD1 chains. [4Fe-4S] cluster is required as a cofactor.

The protein resides in the cytoplasm. It localises to the nucleus. Component of the cytosolic iron-sulfur (Fe/S) protein assembly (CIA) machinery. Required for maturation of extramitochondrial Fe-S proteins. The NBP35-CFD1 heterotetramer forms a Fe-S scaffold complex, mediating the de novo assembly of an Fe-S cluster and its transfer to target apoproteins. Required for biogenesis and export of both ribosomal subunits, which may reflect a role in assembly of the Fe/S clusters in RLI1, a protein which performs rRNA processing and ribosome export. The protein is Cytosolic Fe-S cluster assembly factor NBP35 of Saccharomyces cerevisiae (strain ATCC 204508 / S288c) (Baker's yeast).